The chain runs to 136 residues: Large ribosomal subunit protein uL16c (136 aa).

The protein belongs to the universal ribosomal protein uL16 family. As to quaternary structure, part of the 50S ribosomal subunit.

The protein localises to the plastid. It localises to the chloroplast. In Zea mays (Maize), this protein is Large ribosomal subunit protein uL16c.